The primary structure comprises 688 residues: Elongation factor G (688 aa).

In terms of domain architecture, tr-type G spans Glu-8–Leu-282. Residues Ala-17–Thr-24, Asp-81–His-85, and Asn-135–Asp-138 contribute to the GTP site.

This sequence belongs to the TRAFAC class translation factor GTPase superfamily. Classic translation factor GTPase family. EF-G/EF-2 subfamily.

Its subcellular location is the cytoplasm. Its function is as follows. Catalyzes the GTP-dependent ribosomal translocation step during translation elongation. During this step, the ribosome changes from the pre-translocational (PRE) to the post-translocational (POST) state as the newly formed A-site-bound peptidyl-tRNA and P-site-bound deacylated tRNA move to the P and E sites, respectively. Catalyzes the coordinated movement of the two tRNA molecules, the mRNA and conformational changes in the ribosome. The sequence is that of Elongation factor G from Clostridium perfringens (strain ATCC 13124 / DSM 756 / JCM 1290 / NCIMB 6125 / NCTC 8237 / Type A).